We begin with the raw amino-acid sequence, 947 residues long: MTPLSSPLSQYWQTVVERLPEGFTETSLSVQAKSVLTFSDFALDSVIAHPEWLAELESASPQADEWRHYAGWLQEALAGVCDDASLMRELRFFRRRIMVRIAWAQTLSLVDDETILQQLSHLAETLIVGARDWLYAACCREWGTPCNPQGVPQPLLILGMGKLGGGELNFSSDIDLIFAWPEHGETRGGRRELDNAQFFTRLGQRLIKALDQPTMDGFVYRVDMRLRPFGDSGPLVLSFAALEDYYQEQGRDWERYAMVKARLMGDNDDAWSRELRAMLRPFVFRRYIDFSVIQSLRNMKGMIAREVRRRGLKDNIKLGAGGIREIEFIVQVFQLIRGGREPSLQSRSLLPTLDAIAALHLLPENDVAQLRMAYLFLRRLENLLQSINDEQTQTLPADDLNRARLAWGMKAENWPQLVGELTDHMANVRRVFNELIGDDEADTPQEEERSEPWREVWQDALQEDDSTPVLAHLADEDRRQVLTLIADFRKELDKRPIGPRGRQVLDQLMPHLLADVCSREDAAVTLSRITPLLAGIVTRTTYLELLSEFPGALKHLIMLCAASPMIASQLARYPLLLDELLDPGTLYQPTATDAYRDELRQYLLRVPEEDEEQQLEALRQFKQAQLLRIAAADIAGTLPVMKVSDHLTWLAEAMIDAVVQQAWTQMVARYGQPAHLDERQGRGFAVVGYGKLGGWELGYSSDLDLIFLHDCPMDVMTNGEREIDGRQFYLRLAQRIMHLFSTRTSSGILYEVDARLRPSGAAGMLVTSADAFADYQQHEAWTWEHQALVRARVVYGDPQLTSQFDTVRRTIMTTARDGKTLQTEVREMREKMRAHLGNKHRDRFDIKADEGGITDIEFIAQYLVLRYAHEKPKLTRWSDNVRILELLAQNGIMDEHEAQALTVAYTTLRDELHHLALQELPGHVAQTCFSKERALVQASWRKWLVAV.

Positions 1 to 440 are adenylyl removase; it reads MTPLSSPLSQ…VFNELIGDDE (440 aa). The interval 450–947 is adenylyl transferase; sequence SEPWREVWQD…ASWRKWLVAV (498 aa).

This sequence belongs to the GlnE family. Mg(2+) is required as a cofactor.

It carries out the reaction [glutamine synthetase]-O(4)-(5'-adenylyl)-L-tyrosine + phosphate = [glutamine synthetase]-L-tyrosine + ADP. The enzyme catalyses [glutamine synthetase]-L-tyrosine + ATP = [glutamine synthetase]-O(4)-(5'-adenylyl)-L-tyrosine + diphosphate. In terms of biological role, involved in the regulation of glutamine synthetase GlnA, a key enzyme in the process to assimilate ammonia. When cellular nitrogen levels are high, the C-terminal adenylyl transferase (AT) inactivates GlnA by covalent transfer of an adenylyl group from ATP to specific tyrosine residue of GlnA, thus reducing its activity. Conversely, when nitrogen levels are low, the N-terminal adenylyl removase (AR) activates GlnA by removing the adenylyl group by phosphorolysis, increasing its activity. The regulatory region of GlnE binds the signal transduction protein PII (GlnB) which indicates the nitrogen status of the cell. The protein is Bifunctional glutamine synthetase adenylyltransferase/adenylyl-removing enzyme of Salmonella newport (strain SL254).